The sequence spans 165 residues: SsrA-binding protein (165 aa).

It belongs to the SmpB family.

It is found in the cytoplasm. In terms of biological role, required for rescue of stalled ribosomes mediated by trans-translation. Binds to transfer-messenger RNA (tmRNA), required for stable association of tmRNA with ribosomes. tmRNA and SmpB together mimic tRNA shape, replacing the anticodon stem-loop with SmpB. tmRNA is encoded by the ssrA gene; the 2 termini fold to resemble tRNA(Ala) and it encodes a 'tag peptide', a short internal open reading frame. During trans-translation Ala-aminoacylated tmRNA acts like a tRNA, entering the A-site of stalled ribosomes, displacing the stalled mRNA. The ribosome then switches to translate the ORF on the tmRNA; the nascent peptide is terminated with the 'tag peptide' encoded by the tmRNA and targeted for degradation. The ribosome is freed to recommence translation, which seems to be the essential function of trans-translation. This chain is SsrA-binding protein, found in Prochlorococcus marinus (strain MIT 9515).